Here is a 216-residue protein sequence, read N- to C-terminus: ATP phosphoribosyltransferase (216 aa).

This sequence belongs to the ATP phosphoribosyltransferase family. Short subfamily. Heteromultimer composed of HisG and HisZ subunits.

Its subcellular location is the cytoplasm. It catalyses the reaction 1-(5-phospho-beta-D-ribosyl)-ATP + diphosphate = 5-phospho-alpha-D-ribose 1-diphosphate + ATP. The protein operates within amino-acid biosynthesis; L-histidine biosynthesis; L-histidine from 5-phospho-alpha-D-ribose 1-diphosphate: step 1/9. Its function is as follows. Catalyzes the condensation of ATP and 5-phosphoribose 1-diphosphate to form N'-(5'-phosphoribosyl)-ATP (PR-ATP). Has a crucial role in the pathway because the rate of histidine biosynthesis seems to be controlled primarily by regulation of HisG enzymatic activity. The sequence is that of ATP phosphoribosyltransferase from Synechococcus sp. (strain CC9902).